The chain runs to 394 residues: Seipin (394 aa).

The Cytoplasmic portion of the chain corresponds to 1–27; that stretch reads MVNDPPVPALLWAQEMGHVMAGRARKL. Residues 28–48 form a helical membrane-spanning segment; it reads LLQFGVFFCTILLLLWVSVFL. Topologically, residues 49 to 242 are lumenal; that stretch reads YGSFYYSYMP…TCAFVGVASN (194 aa). Residues N88 and N242 are each glycosylated (N-linked (GlcNAc...) asparagine). A helical transmembrane segment spans residues 243 to 263; the sequence is FTFLSVIVLFSYMQWVWGGIW. At 264–394 the chain is on the cytoplasmic side; sequence PRQRLSLQVN…VRQRPICSSS (131 aa). The segment at 281-394 is disordered; the sequence is RKDIQRKVSA…VRQRPICSSS (114 aa). Position 289 is a phosphoserine (S289). Residues 292–303 are compositionally biased toward low complexity; that stretch reads QPGPQGQEESPQ. A phosphoserine mark is found at S346 and S351.

This sequence belongs to the seipin family. As to quaternary structure, undecamer (an oligomer having eleven subunits). Oligomerization is important for its function in lipid droplet formation. Interacts with LDAF1 to form an oligomeric complex. Interacts with RAB18. Interacts with ZFYVE1 in a RAB18-dependent manner.

It is found in the endoplasmic reticulum membrane. The protein localises to the lipid droplet. Plays a crucial role in the formation of lipid droplets (LDs) which are storage organelles at the center of lipid and energy homeostasis. In association with LDAF1, defines the sites of LD formation in the ER. Also required for growth and maturation of small nascent LDs into larger mature LDs. Mediates the formation and/or stabilization of endoplasmic reticulum-lipid droplets (ER-LD) contacts, facilitating protein and lipid delivery from the ER into growing LDs. Regulates the maturation of ZFYVE1-positive nascent LDs and the function of the RAB18-ZFYVE1 complex in mediating the formation of ER-LD contacts. Binds anionic phospholipids including phosphatidic acid. Plays an important role in the differentiation and development of adipocytes. The chain is Seipin from Bos taurus (Bovine).